A 116-amino-acid polypeptide reads, in one-letter code: Protein BIC2 (116 aa).

Disordered regions lie at residues 1–33 (MKNT…TCFP) and 95–116 (DSGD…ESSC).

The protein localises to the nucleus. Regulates the blue-light dependent dimerization of CRY2 and formation of photobodies. Inhibits CRY phosphorylation. In Arabidopsis thaliana (Mouse-ear cress), this protein is Protein BIC2.